Reading from the N-terminus, the 594-residue chain is Aspartate--tRNA(Asp/Asn) ligase (594 aa).

An L-aspartate-binding site is contributed by glutamate 175. The aspartate stretch occupies residues 199-202; it reads QLFK. Arginine 221 lines the L-aspartate pocket. ATP contacts are provided by residues 221–223 and glutamine 230; that span reads RDE. Histidine 446 serves as a coordination point for L-aspartate. Glutamate 492 contributes to the ATP binding site. Arginine 499 is a binding site for L-aspartate. Residue 544–547 coordinates ATP; sequence GFDR.

This sequence belongs to the class-II aminoacyl-tRNA synthetase family. Type 1 subfamily. As to quaternary structure, homodimer.

Its subcellular location is the cytoplasm. It catalyses the reaction tRNA(Asx) + L-aspartate + ATP = L-aspartyl-tRNA(Asx) + AMP + diphosphate. Its function is as follows. Aspartyl-tRNA synthetase with relaxed tRNA specificity since it is able to aspartylate not only its cognate tRNA(Asp) but also tRNA(Asn). Reaction proceeds in two steps: L-aspartate is first activated by ATP to form Asp-AMP and then transferred to the acceptor end of tRNA(Asp/Asn). This Hydrogenobaculum sp. (strain Y04AAS1) protein is Aspartate--tRNA(Asp/Asn) ligase.